The sequence spans 205 residues: Ribosomal RNA small subunit methyltransferase G (205 aa).

Residues glycine 66, phenylalanine 71, 119-120 (IE), and arginine 135 contribute to the S-adenosyl-L-methionine site.

This sequence belongs to the methyltransferase superfamily. RNA methyltransferase RsmG family.

The protein resides in the cytoplasm. The enzyme catalyses guanosine(527) in 16S rRNA + S-adenosyl-L-methionine = N(7)-methylguanosine(527) in 16S rRNA + S-adenosyl-L-homocysteine. Its function is as follows. Specifically methylates the N7 position of guanine in position 527 of 16S rRNA. In Rhizobium leguminosarum bv. trifolii (strain WSM2304), this protein is Ribosomal RNA small subunit methyltransferase G.